A 590-amino-acid chain; its full sequence is (+)-sabinene synthase, chloroplastic (590 aa).

The N-terminal 51 residues, 1 to 51 (MSSISINIAMPLNSLHNFERKPSKAWSTSCTAPAARLRASSSLQQEKPHQI), are a transit peptide targeting the chloroplast. Mg(2+) contacts are provided by D343, D347, D487, T491, and E495. Positions 343 to 347 (DDVYD) match the DDXXD motif motif.

Belongs to the terpene synthase family. In terms of assembly, monomer. Requires Mg(2+) as cofactor.

The protein resides in the plastid. It is found in the chloroplast. The catalysed reaction is (2E)-geranyl diphosphate = (1R,5R)-sabinene + diphosphate. It participates in terpene metabolism; sabinene hydrate biosynthesis. Functionally, catalyzes the formation of the (-)-3-isothujone precursor sabinene from geranyl diphosphate. The enzyme also produces significant amounts of gamma-terpinene, terpinolene and limonene. This chain is (+)-sabinene synthase, chloroplastic, found in Salvia officinalis (Sage).